The following is a 186-amino-acid chain: Protein FAM9B (186 aa).

The interval 1-93 (MAAWGKKHAG…KHALRKKQLK (93 aa)) is disordered. Basic and acidic residues-rich tracts occupy residues 10 to 27 (GKDP…FTET) and 34 to 58 (DEHG…KPED). Residues 66–93 (KRKRMKMDKTCSKTKNKSKHALRKKQLK) show a composition bias toward basic residues.

Belongs to the XLR/SYCP3 family. Expressed in testis and ovary (at protein level).

It is found in the nucleus. The protein resides in the cytoplasm. Its subcellular location is the chromosome. May play a role in meiosis. This Homo sapiens (Human) protein is Protein FAM9B.